Consider the following 52-residue polypeptide: uncharacterized protein (52 aa).

This is an uncharacterized protein from Dictyostelium discoideum (Social amoeba).